Consider the following 132-residue polypeptide: Fluoride-specific ion channel FluC 3 (132 aa).

4 helical membrane-spanning segments follow: residues 4–24, 32–52, 66–86, and 95–115; these read ILLV…FGGW, FPVG…LIMY, IFLT…GYES, and LMLM…AVYL. Na(+) is bound by residues Gly-74 and Thr-77.

This sequence belongs to the fluoride channel Fluc/FEX (TC 1.A.43) family.

It localises to the cell membrane. It catalyses the reaction fluoride(in) = fluoride(out). Na(+) is not transported, but it plays an essential structural role and its presence is essential for fluoride channel function. Fluoride-specific ion channel. Important for reducing fluoride concentration in the cell, thus reducing its toxicity. In Methanosarcina barkeri (strain Fusaro / DSM 804), this protein is Fluoride-specific ion channel FluC 3.